A 299-amino-acid polypeptide reads, in one-letter code: Acetylglutamate kinase (299 aa).

Substrate-binding positions include 72–73 (GG), arginine 94, and asparagine 196.

The protein belongs to the acetylglutamate kinase family. ArgB subfamily.

Its subcellular location is the cytoplasm. It carries out the reaction N-acetyl-L-glutamate + ATP = N-acetyl-L-glutamyl 5-phosphate + ADP. It functions in the pathway amino-acid biosynthesis; L-arginine biosynthesis; N(2)-acetyl-L-ornithine from L-glutamate: step 2/4. Its function is as follows. Catalyzes the ATP-dependent phosphorylation of N-acetyl-L-glutamate. The protein is Acetylglutamate kinase of Burkholderia ambifaria (strain MC40-6).